A 177-amino-acid chain; its full sequence is Outer envelope pore protein 21, chloroplastic (177 aa).

At Met-1 to Lys-21 the chain is on the cytoplasmic side. The beta stranded transmembrane segment at Leu-22–Gln-31 threads the bilayer. At Val-32–Pro-55 the chain is on the chloroplast intermembrane side. Residues Asn-56–Val-65 form a beta stranded membrane-spanning segment. Residues Arg-66–Asp-81 are Cytoplasmic-facing. The beta stranded transmembrane segment at Lys-82 to Lys-91 threads the bilayer. Residues Thr-92–Asn-97 lie on the Chloroplast intermembrane side of the membrane. The beta stranded transmembrane segment at Asp-98–Gly-107 threads the bilayer. Topologically, residues Gly-108–Ser-120 are cytoplasmic. A beta stranded transmembrane segment spans residues Arg-121 to Val-130. At Phe-131–Gln-137 the chain is on the chloroplast intermembrane side. The beta stranded transmembrane segment at Asp-138–Ala-147 threads the bilayer. The Cytoplasmic portion of the chain corresponds to Phe-148–Pro-152. A beta stranded membrane pass occupies residues Tyr-153–Thr-162. Over Phe-163–Lys-168 the chain is Chloroplast intermembrane. The chain crosses the membrane as a beta stranded span at residues Gly-169–Leu-177.

The protein belongs to the plastid outer envelope porin OEP21 (TC 1.B.29) family. As to expression, present in roots, shoots and leaves.

It is found in the plastid. Its subcellular location is the etioplast membrane. It localises to the chloroplast outer membrane. Its function is as follows. Voltage-dependent rectifying anion channel that facilitates the translocation between chloroplast and cytoplasm of phosphorylated carbohydrates such as triosephosphate, 3-phosphoglycerate and inorganic phosphate (Pi) depending of ATP to triosephosphate ratio in the plastidial intermembrane space; in high triosephosphate/ATP conditions (e.g. photosynthesis), export of triosphosphate from chloroplast (outward rectifying channels), but in high ATP/triosephosphate conditions (e.g. dark phase), import of phosphosolutes (inward rectifying channels). The chain is Outer envelope pore protein 21, chloroplastic (OEP21) from Pisum sativum (Garden pea).